The chain runs to 174 residues: Large ribosomal subunit protein uL10 (174 aa).

Belongs to the universal ribosomal protein uL10 family. In terms of assembly, part of the ribosomal stalk of the 50S ribosomal subunit. The N-terminus interacts with L11 and the large rRNA to form the base of the stalk. The C-terminus forms an elongated spine to which L12 dimers bind in a sequential fashion forming a multimeric L10(L12)X complex.

Its function is as follows. Forms part of the ribosomal stalk, playing a central role in the interaction of the ribosome with GTP-bound translation factors. The polypeptide is Large ribosomal subunit protein uL10 (Methylibium petroleiphilum (strain ATCC BAA-1232 / LMG 22953 / PM1)).